The primary structure comprises 72 residues: Translation initiation factor IF-1 (72 aa).

Residues 1-72 (MAKSDVIEVD…DKGRITYRYK (72 aa)) form the S1-like domain.

This sequence belongs to the IF-1 family. Component of the 30S ribosomal translation pre-initiation complex which assembles on the 30S ribosome in the order IF-2 and IF-3, IF-1 and N-formylmethionyl-tRNA(fMet); mRNA recruitment can occur at any time during PIC assembly.

The protein localises to the cytoplasm. One of the essential components for the initiation of protein synthesis. Stabilizes the binding of IF-2 and IF-3 on the 30S subunit to which N-formylmethionyl-tRNA(fMet) subsequently binds. Helps modulate mRNA selection, yielding the 30S pre-initiation complex (PIC). Upon addition of the 50S ribosomal subunit IF-1, IF-2 and IF-3 are released leaving the mature 70S translation initiation complex. This Sulfurimonas denitrificans (strain ATCC 33889 / DSM 1251) (Thiomicrospira denitrificans (strain ATCC 33889 / DSM 1251)) protein is Translation initiation factor IF-1.